We begin with the raw amino-acid sequence, 1201 residues long: MKFIKYLLILFLILKINYFVESGVDCQKNTEYFVENSCGKNPSKLNINTDIYYFESIGITPYSPPVYNESTTNYFWYLKDGIEYTFSYRYKGCQNIKSHSIVSQGMYYQLLSQPLCPNTYFNYTIYNSGEFGGNTNYYSTPQNIISSNYNGSCTINILITPLSNSKGAFQSSAAKYTYPTCGFNNGTISVDLTKGYSNCHLFSQFDTSFLYEIEPSSPCFYSGLESNYYYLFVDSKECATERLSIQLFNVFTPLEITFENVPDYNQNSIVSLSLSSGDNGILNKTNSFATVGGTGPDPLSTWSHKETKITSTTQFGYFYNKDFSTDPLKVICSFNDGFEPQKFNPNFNFTVTKSDTCLENVTITFYPLPSQTFVVHDYILGNILPLTNNVLSVQYNKFLHISEISSNSERYYSTAFYAPIYRVVETSNGIGCWKTYNITIGEYQIYSNLTMKVYDGDEYEYIFYPIEGVFVNVPANYFYIHYKVKDCEVESIIMIDKYEEITPMDDVKMDISIYELGNCTHETSILVNIDTVFGNFSKVYSSFSNGYFSFYLPNCSCNIGFYYSIPPLIDSETFSYGFISDLDCNSTGTVIQLLGSNGNTIQEVYSNGIKLIVNNDVDTDFAYNIGPGENNVTIKYSNTKGTCYKSQMINIQSPYEVPLVEVTPVIDCDSSDGKISISNYMNFYSLDIIIDSSTIPINSGLVSNLPTGTYTIVYGNSGSCANSIDVYVPSSEQYVEITTSVISHPTCGEQSLNGDGKVNVTLKVLGIKKNTFYIQNQNQISSLTFSDGGVYIAAAPGLNTLSISYGGCIWNRDVNTTISKPTFSFEKIYNDTCLSSVYYKLINNNTNIAINSITSPYTLYSYQNEYYTQMATNLIYPYTVTWNTYCTETFYQEFTFDTPFNYYSNYIQYEIVKADNCNSFKIDIIIKNMNTFQKVTLSSKYPTPINSTHAIFKNLPPSISYDISFTLFDGCSGTEMVGYQQLSNGNTKETIDIIKVNDICNSGKGSIQLSNMDTSNHYYYVKTFSDYYVYTSYPIQPTTNDNGTIISLLSNLPVGSYNITRNCKSITNCYIETKVVIENKDPIIESISVTDSYDKLNNGTAEIKLNYNSTYPINFKIIGTQLSNQNGIFSNLPPKTYEVQVTLTDRMCPITISQSFTINFKTSPTPPPLPQDPSDELSTSSFIQLNILSLLLISIFTIFIL.

The first 22 residues, methionine 1–serine 22, serve as a signal peptide directing secretion. The Extracellular segment spans residues glycine 23–serine 1180. Residues asparagine 68, asparagine 122, asparagine 150, asparagine 185, asparagine 283, asparagine 348, asparagine 360, asparagine 437, asparagine 448, asparagine 518, asparagine 535, asparagine 554, asparagine 585, asparagine 631, asparagine 759, asparagine 815, asparagine 830, asparagine 844, asparagine 946, asparagine 1042, asparagine 1058, asparagine 1098, and asparagine 1108 are each glycosylated (N-linked (GlcNAc...) asparagine). Residues serine 1181–leucine 1201 traverse the membrane as a helical segment.

The protein resides in the membrane. The protein is Protein dduB (dduB) of Dictyostelium discoideum (Social amoeba).